The chain runs to 340 residues: MIFIDACLKKPTPYTPVWMMRQAGRYLPEYMAVRAKAGDFLSLCKDYKKASEVTLQPVEILGVDAAILFSDILVVPLEMGMDLRFEKGEGPVFTKPLRDEAALDALSIERSVKSLAYVYDTIKLTRENLAKDKALIGFCGAPWTIATYMIEGGGSKNYAVCKKMLYENPEFLHQILEKVTQALILYIKEQIKAGVNAVQIFDSWAAALEEQAYFEFGFSYINKIVDSVKAEFPDIPVIVFPKGISGYLDKISGKFDVFGVDWSTPIELAKEKLSPRYVLQGNMEPTRLYSKKAIDEGVDKILSTMRGAPHIFNLGHGILPDVPVENAKYFIKEVQRKSAR.

Substrate is bound by residues 21 to 25 (RQAGR), aspartate 71, tyrosine 148, serine 203, and histidine 316.

This sequence belongs to the uroporphyrinogen decarboxylase family. As to quaternary structure, homodimer.

It is found in the cytoplasm. The enzyme catalyses uroporphyrinogen III + 4 H(+) = coproporphyrinogen III + 4 CO2. It participates in porphyrin-containing compound metabolism; protoporphyrin-IX biosynthesis; coproporphyrinogen-III from 5-aminolevulinate: step 4/4. Its function is as follows. Catalyzes the decarboxylation of four acetate groups of uroporphyrinogen-III to yield coproporphyrinogen-III. The protein is Uroporphyrinogen decarboxylase of Campylobacter concisus (strain 13826).